The chain runs to 567 residues: 25S rRNA (cytosine-C(5))-methyltransferase NSUN5 (567 aa).

Residues 1-17 are compositionally biased toward basic residues; sequence MVARRNKPKAPLVKHRF. Residues 1–88 form a disordered region; sequence MVARRNKPKA…KTPPATKQKF (88 aa). S-adenosyl-L-methionine is bound by residues 312-318, glutamate 336, aspartate 363, and aspartate 383; that span reads CSAPGNK. Residue cysteine 444 is the Nucleophile of the active site.

This sequence belongs to the class I-like SAM-binding methyltransferase superfamily. RsmB/NOP family.

It carries out the reaction a cytidine in 25S rRNA + S-adenosyl-L-methionine = a 5-methylcytidine in 25S rRNA + S-adenosyl-L-homocysteine + H(+). Its function is as follows. S-adenosyl-L-methionine-dependent methyltransferase that specifically methylates the C(5) position of cytosine 2268 (m5C2268) in 25S rRNA. The protein is 25S rRNA (cytosine-C(5))-methyltransferase NSUN5 of Arabidopsis thaliana (Mouse-ear cress).